We begin with the raw amino-acid sequence, 490 residues long: MSRYGLQKLYINGAYTDSASGDTFDAVNPANGECIAQLQAANAQDVDKAVAAAKQGQPVWAAMTAMERSRILRRAVDILRDRNDELAAIETADTGKPLSETRSVDIVTGADVLEYYAGLIPALEGQQIPLRGSAFVYTRREPLGVVAGIGAWNYPIQIALWKSAPALAAGNAMIFKPSEVTSLTALKLAEIYTEAGLPAGVFNVLTGSGDQVGQMLTEHPGIAKVSFTGGIASGKKVMANAAGSTLKDVTMELGGKSPLIIFADADLDKAADIAMMANFYSSGQVCTNGTRVFVPQALQAAFEQKIVERVKRIHIGDPSDERTNFGPLVSFQHRDSVMRYIDSGKREGATLLIGGYSLTEDALAHGAYVAPTVFTHCRDDMQIVREEIFGPVMSILSYQSEEEVIRRANDTEYGLAAGVVTQDLNRAHRVIHQLQAGICWINTWGESAPEMPVGGYKHSGVGRENGISTLEHYTQIKSIQVELGSFNSVF.

D93 contributes to the K(+) binding site. 150–152 contacts NAD(+); it reads GAW. K162 functions as the Charge relay system in the catalytic mechanism. 176–179 is an NAD(+) binding site; the sequence is KPSE. V180 is a binding site for K(+). Position 230 to 233 (230 to 233) interacts with NAD(+); sequence GIAS. L246 lines the K(+) pocket. E252 acts as the Proton acceptor in catalysis. Residues G254, C286, and E387 each contribute to the NAD(+) site. C286 functions as the Nucleophile in the catalytic mechanism. The residue at position 286 (C286) is a Cysteine sulfenic acid (-SOH). Residues K457 and G460 each coordinate K(+). Residue E464 is the Charge relay system of the active site.

Belongs to the aldehyde dehydrogenase family. Dimer of dimers. Requires K(+) as cofactor.

The enzyme catalyses betaine aldehyde + NAD(+) + H2O = glycine betaine + NADH + 2 H(+). It functions in the pathway amine and polyamine biosynthesis; betaine biosynthesis via choline pathway; betaine from betaine aldehyde: step 1/1. Functionally, involved in the biosynthesis of the osmoprotectant glycine betaine. Catalyzes the irreversible oxidation of betaine aldehyde to the corresponding acid. This Yersinia pseudotuberculosis serotype O:1b (strain IP 31758) protein is Betaine aldehyde dehydrogenase.